Consider the following 227-residue polypeptide: Mitochondrial inner membrane protease ATP23 (227 aa).

Position 124 (His-124) interacts with a divalent metal cation. The active site involves Glu-125. His-128 is a binding site for a divalent metal cation.

This sequence belongs to the peptidase M76 family. Interacts with ATP6.

The protein localises to the mitochondrion inner membrane. Functionally, has a dual role in the assembly of mitochondrial ATPase. Acts as a protease that removes the N-terminal 10 residues of mitochondrial ATPase CF(0) subunit 6 (ATP6) at the intermembrane space side. Also involved in the correct assembly of the membrane-embedded ATPase CF(0) particle, probably mediating association of ATP6 with the subunit 9 ring. The polypeptide is Mitochondrial inner membrane protease ATP23 (ATP23) (Saccharomyces cerevisiae (strain Lalvin EC1118 / Prise de mousse) (Baker's yeast)).